The chain runs to 334 residues: MADQTISNVLNQPQWRCLESKIEKSTLHYGRFIISPLWKGQANTIGLALRRTLLSEVEGTCITSVKIKNAIHEYSSLSGVQESVHDILINLKKIILSSSFSGIFEGFLSVVGPKTVLASDLNLPSFIKIVNPDQYIATVNKPINFNLQIYIQKGKGYSLKNPISIKQGFFLVDPVFIPIRSVNYSIHSFEDEKATKEFLIVEVWTNGSIEPKEAIKEASYNLVNLFTPLVSQEYQQLKNQLFKEDEKNKELNFIETNSNAISDNENSYNLYNQIFLDQLELSSRAYNSLKKNNINTISDLLKYSYEDLLKIKNFGKKSADQVIEQLKKRFKIQL.

The interval 1 to 233 (MADQTISNVL…NLFTPLVSQE (233 aa)) is alpha N-terminal domain (alpha-NTD). Residues 263–334 (DNENSYNLYN…QLKKRFKIQL (72 aa)) are alpha C-terminal domain (alpha-CTD).

Belongs to the RNA polymerase alpha chain family. As to quaternary structure, in plastids the minimal PEP RNA polymerase catalytic core is composed of four subunits: alpha, beta, beta', and beta''. When a (nuclear-encoded) sigma factor is associated with the core the holoenzyme is formed, which can initiate transcription.

The protein localises to the plastid. It is found in the chloroplast. The catalysed reaction is RNA(n) + a ribonucleoside 5'-triphosphate = RNA(n+1) + diphosphate. Its function is as follows. DNA-dependent RNA polymerase catalyzes the transcription of DNA into RNA using the four ribonucleoside triphosphates as substrates. The chain is DNA-directed RNA polymerase subunit alpha from Chaetosphaeridium globosum (Charophycean green alga).